The following is a 541-amino-acid chain: Malate synthase (541 aa).

Arginine 172 acts as the Proton acceptor in catalysis. Catalysis depends on aspartate 452, which acts as the Proton donor.

The protein belongs to the malate synthase family.

The protein localises to the cytoplasm. The enzyme catalyses glyoxylate + acetyl-CoA + H2O = (S)-malate + CoA + H(+). The protein operates within carbohydrate metabolism; glyoxylate cycle; (S)-malate from isocitrate: step 2/2. The protein is Malate synthase (mls) of Myxococcus xanthus (strain DK1622).